Here is an 89-residue protein sequence, read N- to C-terminus: Small ribosomal subunit protein uS15 (89 aa).

It belongs to the universal ribosomal protein uS15 family. Part of the 30S ribosomal subunit. Forms a bridge to the 50S subunit in the 70S ribosome, contacting the 23S rRNA.

Its function is as follows. One of the primary rRNA binding proteins, it binds directly to 16S rRNA where it helps nucleate assembly of the platform of the 30S subunit by binding and bridging several RNA helices of the 16S rRNA. In terms of biological role, forms an intersubunit bridge (bridge B4) with the 23S rRNA of the 50S subunit in the ribosome. This chain is Small ribosomal subunit protein uS15, found in Geobacillus stearothermophilus (Bacillus stearothermophilus).